Reading from the N-terminus, the 432-residue chain is T-box transcription factor T (432 aa).

A DNA-binding region (T-box) is located at residues 49-217; sequence LWTRFKELTN…HNPFAKAFLD (169 aa). A disordered region spans residues 274 to 306; it reads CERYSSLRNHRSAPYPSPYTHRNNSPNNLADNS. A compositionally biased stretch (polar residues) spans 293 to 306; sequence THRNNSPNNLADNS.

When not bound to DNA, exists as a monomer. Binds DNA as a dimer. In terms of tissue distribution, expressed in presumptive mesodermal cells around the blastopore, and then in the notochord.

The protein resides in the nucleus. Its function is as follows. Involved in the transcriptional regulation of genes required for mesoderm formation and differentiation. Binds to the palindromic T site 5'-TTCACACCTAGGTGTGAA-3' DNA sequence. Causes dorsal mesodermal differentiation of animal cap ectoderm when co-expressed with wnt8 and noggin. None of these molecules causes dorsal mesoderm formation when expressed alone. Establishes the left/right axis at early gastrula stage by directly up-regulating mesodermal expression of zic3. The polypeptide is T-box transcription factor T (Xenopus laevis (African clawed frog)).